Reading from the N-terminus, the 495-residue chain is Polybrominated aromatic compounds synthase (495 aa).

Cysteine 437 contacts heme.

It belongs to the cytochrome P450 family. The cofactor is heme.

Its function is as follows. Cytochrome P450 protein involved in the biosynthesis of polybrominated aromatic organic compounds. In the presence of ferredoxin, ferredoxin reductase and NADH, catalyzes the coupling of bromophenols and bromopyrroles, forming various polybrominated biphenyls and hydroxylated polybrominated diphenyl ethers (OH-BDE). Can also mediate the heterocoupling of 3,5-dibromocatechol, forming six different compounds, including polybrominated dibenzo-p-dioxins, which are among the most toxic molecules known to man. The polypeptide is Polybrominated aromatic compounds synthase (Marinomonas mediterranea (strain ATCC 700492 / JCM 21426 / NBRC 103028 / MMB-1)).